The chain runs to 444 residues: ATP-dependent protease ATPase subunit HslU (444 aa).

Residues Ile-18, 60 to 65 (GVGKTE), Asp-256, Glu-321, and Arg-393 each bind ATP.

This sequence belongs to the ClpX chaperone family. HslU subfamily. A double ring-shaped homohexamer of HslV is capped on each side by a ring-shaped HslU homohexamer. The assembly of the HslU/HslV complex is dependent on binding of ATP.

It is found in the cytoplasm. Its function is as follows. ATPase subunit of a proteasome-like degradation complex; this subunit has chaperone activity. The binding of ATP and its subsequent hydrolysis by HslU are essential for unfolding of protein substrates subsequently hydrolyzed by HslV. HslU recognizes the N-terminal part of its protein substrates and unfolds these before they are guided to HslV for hydrolysis. The polypeptide is ATP-dependent protease ATPase subunit HslU (Buchnera aphidicola subsp. Baizongia pistaciae (strain Bp)).